The following is a 116-amino-acid chain: uncharacterized protein (116 aa).

The protein belongs to the mimivirus L15/L51/R83 family.

This is an uncharacterized protein from Acanthamoeba polyphaga mimivirus (APMV).